The chain runs to 601 residues: Trehalose synthase/amylase TreS (601 aa).

The tract at residues 1–21 (MNEAEHSVEHPPVQGSHVEGG) is disordered. A substrate-binding site is contributed by Asp98. Asn140 is a Ca(2+) binding site. His141 and Gln206 together coordinate substrate. Asp208 provides a ligand contact to Ca(2+). A substrate-binding site is contributed by Arg236. Catalysis depends on Asp238, which acts as the Nucleophile. Residues Tyr242, Leu243, and Glu245 each contribute to the Ca(2+) site. The active-site Proton donor is Glu280. Substrate-binding residues include His349 and Asp350.

Belongs to the glycosyl hydrolase 13 family. TreS subfamily. Homohexamer.

It catalyses the reaction D-maltose = alpha,alpha-trehalose. The catalysed reaction is Endohydrolysis of (1-&gt;4)-alpha-D-glucosidic linkages in polysaccharides containing three or more (1-&gt;4)-alpha-linked D-glucose units.. It participates in glycan biosynthesis; glycogen biosynthesis. It functions in the pathway capsule biogenesis; capsule polysaccharide biosynthesis. Functionally, catalyzes the reversible interconversion of maltose and trehalose by transglucosylation. Also displays amylase activity, catalyzing the endohydrolysis of (1-&gt;4)-alpha-D-glucosidic linkages in glycogen and maltooligosaccharides such as maltoheptaose, to produce maltose which then can be converted to trehalose. TreS plays a key role in the utilization of trehalose for the production of glycogen and alpha-glucan via the TreS-Pep2 branch involved in the biosynthesis of maltose-1-phosphate (M1P). Might also function as a sensor and/or regulator of trehalose levels within the cell. Thus, when trehalose levels in the cell become dangerously low, TreS could expedite the conversion of glycogen to maltose via its amylase activity and then convert the maltose to trehalose; but this enzyme also could expedite or promote the conversion of trehalose to glycogen when cytoplasmic trehalose levels become too high. The polypeptide is Trehalose synthase/amylase TreS (Mycobacterium tuberculosis (strain CDC 1551 / Oshkosh)).